Consider the following 278-residue polypeptide: MAIKIYKPTTNGRRHMTSSDFAEITKTKPEKTLLESQSHTAGRNSYGHITVRHRGGGHKQKYRIIDFKRNKDNTKAVVKAIEYDPNRTANIALLHYTDGIKAYILAPKGLKVGDIVESGDSVDIKPGNALALKNIPSGTSIHNIELKPGKGGQLVRSAGASAQVLGVDGDYTLVRLQSGEVRKILSSCRATIGVVGNEQHSLIKLGKAGRKRWLGKRPQSRGSVMNPNDHPHGGGEGKAPVGRPQPMTPWGKKARGIKTRDTKKASEKLIIRRRKGSK.

The tract at residues 211–278 is disordered; sequence KRWLGKRPQS…LIIRRRKGSK (68 aa). A compositionally biased stretch (basic and acidic residues) spans 258–270; the sequence is KTRDTKKASEKLI.

Belongs to the universal ribosomal protein uL2 family. In terms of assembly, part of the 50S ribosomal subunit. Forms a bridge to the 30S subunit in the 70S ribosome.

One of the primary rRNA binding proteins. Required for association of the 30S and 50S subunits to form the 70S ribosome, for tRNA binding and peptide bond formation. It has been suggested to have peptidyltransferase activity; this is somewhat controversial. Makes several contacts with the 16S rRNA in the 70S ribosome. The polypeptide is Large ribosomal subunit protein uL2 (Lactobacillus helveticus (strain DPC 4571)).